A 746-amino-acid polypeptide reads, in one-letter code: Methyl-CpG-binding domain-containing protein 13 (746 aa).

2 consecutive short sequence motifs (nuclear localization signal) follow at residues E13–V20 and I44–N51. An MBD domain is found at V29–S104. 6 disordered regions span residues I131–D157, L169–E283, P295–T328, T348–P479, T518–A562, and E696–D746. Residues L169–E180 show a composition bias toward basic and acidic residues. A compositionally biased stretch (polar residues) spans R190 to E199. Over residues S244 to E260 the composition is skewed to basic and acidic residues. Positions E256–N263 match the Nuclear localization signal motif. Residues V427–S451 show a composition bias toward polar residues. Residues V465–L476 are compositionally biased toward basic residues. 2 stretches are compositionally biased toward polar residues: residues P529–R546 and K702–T730. Residues G732–D746 show a composition bias toward basic and acidic residues.

It localises to the nucleus. Probable transcriptional regulator. This Arabidopsis thaliana (Mouse-ear cress) protein is Methyl-CpG-binding domain-containing protein 13 (MBD13).